The primary structure comprises 251 residues: Pyrroloquinoline-quinone synthase (251 aa).

This sequence belongs to the PqqC family.

The catalysed reaction is 6-(2-amino-2-carboxyethyl)-7,8-dioxo-1,2,3,4,7,8-hexahydroquinoline-2,4-dicarboxylate + 3 O2 = pyrroloquinoline quinone + 2 H2O2 + 2 H2O + H(+). The protein operates within cofactor biosynthesis; pyrroloquinoline quinone biosynthesis. In terms of biological role, ring cyclization and eight-electron oxidation of 3a-(2-amino-2-carboxyethyl)-4,5-dioxo-4,5,6,7,8,9-hexahydroquinoline-7,9-dicarboxylic-acid to PQQ. The protein is Pyrroloquinoline-quinone synthase of Pseudomonas entomophila (strain L48).